The following is a 153-amino-acid chain: uncharacterized protein (153 aa).

The tract at residues 72 to 98 (LPISKTNDAERSQQTTKAPVMERTESS) is disordered.

The protein localises to the cytoplasm. It localises to the nucleus. This is an uncharacterized protein from Schizosaccharomyces pombe (strain 972 / ATCC 24843) (Fission yeast).